A 363-amino-acid chain; its full sequence is 3-isopropylmalate dehydrogenase (363 aa).

78–91 is an NAD(+) binding site; that stretch reads GPKWEHLPPDQQPE. Residues Arg99, Arg109, Arg138, and Asp227 each coordinate substrate. Residues Asp227, Asp251, and Asp255 each coordinate Mg(2+). NAD(+) is bound at residue 285 to 297; that stretch reads GSAPDIAGKNIAN.

The protein belongs to the isocitrate and isopropylmalate dehydrogenases family. LeuB type 1 subfamily. As to quaternary structure, homodimer. Mg(2+) serves as cofactor. Requires Mn(2+) as cofactor.

The protein resides in the cytoplasm. It carries out the reaction (2R,3S)-3-isopropylmalate + NAD(+) = 4-methyl-2-oxopentanoate + CO2 + NADH. Its pathway is amino-acid biosynthesis; L-leucine biosynthesis; L-leucine from 3-methyl-2-oxobutanoate: step 3/4. Functionally, catalyzes the oxidation of 3-carboxy-2-hydroxy-4-methylpentanoate (3-isopropylmalate) to 3-carboxy-4-methyl-2-oxopentanoate. The product decarboxylates to 4-methyl-2 oxopentanoate. This is 3-isopropylmalate dehydrogenase from Escherichia coli O157:H7.